Reading from the N-terminus, the 159-residue chain is Allergen Arg r 1 (159 aa).

A signal peptide spans Met1–Ala16. Disulfide bonds link Cys50–Cys155 and Cys109–Cys134.

This sequence belongs to the calycin superfamily. Histamine-binding salivary protein family. Post-translationally, not glycosylated.

The protein localises to the secreted. The protein is Allergen Arg r 1 of Argas reflexus (European pigeon tick).